A 668-amino-acid polypeptide reads, in one-letter code: Probable metal-nicotianamine transporter YSL5 (668 aa).

Residues 1–11 (MPPPETSSAAA) show a composition bias toward low complexity. The tract at residues 1 to 22 (MPPPETSSAAAPSPPSPDPLPP) is disordered. A compositionally biased stretch (pro residues) spans 12–22 (PSPPSPDPLPP). Helical transmembrane passes span 27 to 47 (LTLR…VVIH), 51 to 71 (LTVG…FFLA), 102 to 122 (CAIA…IFAM), 147 to 167 (LGWM…SIVM), 209 to 229 (LVKY…FSGV), 268 to 288 (IVNC…WPFI), 315 to 335 (IAIS…FLII), 383 to 403 (LAVS…PIIF), 410 to 430 (LVLV…YGMG), 443 to 463 (IALF…AGLA), 501 to 521 (IGVA…WTAF), 557 to 577 (LEIC…KDVV), 595 to 615 (FYIG…LFAW), and 633 to 653 (GLIC…ILGV).

It belongs to the YSL (TC 2.A.67.2) family. As to expression, expressed in roots.

It localises to the membrane. Its function is as follows. May be involved in the transport of nicotianamine-chelated metals. The chain is Probable metal-nicotianamine transporter YSL5 (YSL5) from Oryza sativa subsp. japonica (Rice).